A 613-amino-acid polypeptide reads, in one-letter code: Tetratricopeptide repeat protein 39A (613 aa).

TPR repeat units follow at residues 315 to 348 (AIFL…QQHW), 505 to 538 (CLVK…EKKI), and 546 to 579 (PNAL…YKNY).

The protein belongs to the TTC39 family.

This chain is Tetratricopeptide repeat protein 39A (TTC39A), found in Homo sapiens (Human).